The sequence spans 337 residues: Protein MICROTUBULE BINDING PROTEIN 2C (337 aa).

The disordered stretch occupies residues 80–147 (RGSMTYTKMP…STSSLTEKDR (68 aa)). Residues 89-103 (PSRESLYKKTSEVKG) are compositionally biased toward basic and acidic residues. Residues 120–142 (KNVSSSQDGYAENFSTPSSTSSL) are compositionally biased toward polar residues. 3 coiled-coil regions span residues 143–194 (TEKD…MKKD), 223–250 (VEKLEWEAMTSSKKVERLQEDLDLLQGE), and 294–314 (LQKMEAAREAYIAAVAAAKEN).

The protein belongs to the microtubule binding protein 2C family. As to quaternary structure, interacts with KN-1. Binds to tobacco mosaic virus movement protein (TMV-MP) at microtubules. In terms of tissue distribution, constitutively expressed in leaves.

It localises to the cytoplasm. The protein resides in the cytoskeleton. In terms of biological role, prevents homeodomain proteins (e.g. STM) association to plasmodesmata and, consequently, cell-to-cell transport. Binds to RNA. Alters KN1 RNA-binding capacity. Regulates cytoskeleton (e.g. actin) organization that determinates cell shape. Interferes with cell-to-cell transport of tobacco mosaic virus movement protein (TMV-MP) by mediating its accumulation at microtubules, thus interfering with cell-to-cell virus movement. The polypeptide is Protein MICROTUBULE BINDING PROTEIN 2C (Nicotiana tabacum (Common tobacco)).